A 320-amino-acid polypeptide reads, in one-letter code: tRNA dimethylallyltransferase (320 aa).

Residue 14-21 participates in ATP binding; the sequence is GPTASGKT. Residue 16–21 coordinates substrate; that stretch reads TASGKT. 2 interaction with substrate tRNA regions span residues 39 to 42 and 163 to 167; these read DSAL and QRLQR.

The protein belongs to the IPP transferase family. As to quaternary structure, monomer. Mg(2+) serves as cofactor.

It carries out the reaction adenosine(37) in tRNA + dimethylallyl diphosphate = N(6)-dimethylallyladenosine(37) in tRNA + diphosphate. Functionally, catalyzes the transfer of a dimethylallyl group onto the adenine at position 37 in tRNAs that read codons beginning with uridine, leading to the formation of N6-(dimethylallyl)adenosine (i(6)A). This is tRNA dimethylallyltransferase from Thioalkalivibrio sulfidiphilus (strain HL-EbGR7).